A 98-amino-acid chain; its full sequence is Cystatin-A (98 aa).

Met1 is modified (N-acetylmethionine). The short motif at 46–50 (QVVAG) is the Secondary area of contact element.

Belongs to the cystatin family.

The protein resides in the cytoplasm. This is an intracellular thiol proteinase inhibitor. The protein is Cystatin-A (CSTA) of Felis catus (Cat).